A 720-amino-acid polypeptide reads, in one-letter code: MDQKLSQLIEELTTSGESQLNAQKMKELKKICKSSEEQLSHAYRLLMTQLTQDHAEIRLSAFQIVDELFTRSHQFRVLLVSDFQEFLELTLGTDNDHPLPPPREAAQRLRQAAMQAVEGWNEKFGEAYKKLALGYHFLKHTKKVDFRDINVRTLAERKREEEKQKHLDKIHRESADRAKREMEEMSDEIGCCLTEVENCFRLLVPLDLGPYREDKFFGEASGIAEDHAPCAWSPDLATPRGSGLSGPQDEEQPCCSKDLVASAHHAGSAVGLKAPAPAATEDPCRDEDRHSEHSDPEDFLRSHGLGSHKYTLDVELPSDGLKVQENEDNLAVLHAARDSLKLIQNKFLPAVCSWVQRFTRAGIYSGHLKQAIDLKMELELALKKYEELNIEPGRGQRSRTEALEDSEEEDQDFVEVPEKEGYEPRIPDHLRAEYGLEPKAPLKTLEKHTAVCSVQERTRRRREEEASDPTSAAAQMLRLQDCLSSPSSSSTRGPLGPEEAQKQAERARAPMVPFGVDLCYWGQEQLTAGKILKSDSQHRFWKPHEVEEEVDSAHVSEMLHSRHITFSGKFEPVQHKCRALRPNGRLCERQDRLKCPFHGKIIPRDDKGQPLNPEDRAREQRQQLQQQRAHPDWQDPEFMKDVEAATGVDLGSSKYSKKGKGKKKKHPNLTDLRERANTARARLEKKVFAKGAVQRVVAAMNQMDQKKHEKFANQFNYALK.

Residues 2-145 (DQKLSQLIEE…HFLKHTKKVD (144 aa)) form a VHS-like region. Residues 169-198 (KIHRESADRAKREMEEMSDEIGCCLTEVEN) adopt a coiled-coil conformation. Disordered stretches follow at residues 234 to 253 (PDLATPRGSGLSGPQDEEQP), 269 to 304 (AVGLKAPAPAATEDPCRDEDRHSEHSDPEDFLRSHG), and 392 to 415 (PGRGQRSRTEALEDSEEEDQDFVE). The segment covering 282-301 (DPCRDEDRHSEHSDPEDFLR) has biased composition (basic and acidic residues). Phosphoserine is present on residues S294 and S406. The span at 403–415 (LEDSEEEDQDFVE) shows a compositional bias: acidic residues. A Glycyl lysine isopeptide (Lys-Gly) (interchain with G-Cter in ubiquitin) cross-link involves residue K419. Residues 451–507 (VCSVQERTRRRREEEASDPTSAAAQMLRLQDCLSSPSSSSTRGPLGPEEAQKQAERA) form a disordered region. The UVSSA-type zinc-finger motif lies at 574 to 601 (QHKCRALRPNGRLCERQDRLKCPFHGKI). 4 residues coordinate Zn(2+): C577, C587, C595, and H598. Disordered regions lie at residues 598-637 (HGKIIPRDDKGQPLNPEDRAREQRQQLQQQRAHPDWQDPE) and 649-669 (DLGSSKYSKKGKGKKKKHPNL). Residues 602–621 (IPRDDKGQPLNPEDRAREQR) are compositionally biased toward basic and acidic residues. A compositionally biased stretch (basic residues) spans 655-667 (YSKKGKGKKKKHP).

This sequence belongs to the UVSSA family. As to quaternary structure, interacts with the elongating form of RNA polymerase II (RNA pol IIo) during transcription stress. Interacts with the TFIIH complex during transcription stress. Interacts with ERCC6. Interacts with ERCC8. Interacts with USP7. Monoubiquitinated at Lys-419 in response to transcription stress; this promotes efficient transfer of TFIIH to stalled RNA polymerase II.

It localises to the chromosome. Functionally, factor involved in transcription-coupled nucleotide excision repair (TC-NER), a mechanism that rapidly removes RNA polymerase II-blocking lesions from the transcribed strand of active genes. Acts as a key adapter that promotes recruitment of factors involved in TC-NER. Facilitates the ubiquitination of the elongating form of RNA polymerase II (RNA pol IIo) at DNA damage sites, thereby promoting RNA pol IIo backtracking and access by the TC-NER machinery to lesion sites. Also promotes stabilization of ERCC6/CSB by recruiting deubiquitinating enzyme USP7 to TC-NER complexes, preventing UV-induced degradation of ERCC6 by the proteasome. Mediates the recruitment of the TFIIH complex and other factors that are required for nucleotide excision repair to RNA polymerase II. Also required to inactivate stalled RNA polymerase II by blocking the access of TCEA1/TFIIS, thereby preventing reactivation of RNA polymerase II. Not involved in processing oxidative damage. In Rattus norvegicus (Rat), this protein is UV-stimulated scaffold protein A (Uvssa).